Consider the following 1044-residue polypeptide: Elongation factor 3B (1044 aa).

The residue at position 2 (Ser2) is an N-acetylserine. An HEAT 1 repeat occupies 5–42; it reads QQSITVLEELFRKLETATSETREGISSELSSFLNGNII. Residues Ile42, His44, and Ser83 each coordinate ADP. HEAT repeat units lie at residues 86–123, 124–162, 166–203, 205–241, 242–279, and 285–323; these read PYIVATVPSVCSKAGSKDNDVQLAATKALKAIASAVNP, VAVKALLPHLIHSLETSNKWKEKVAVLEVISVLVDAAKE, LRMPELIPVLSESMWDTKKGVKEAATTTITKATETVDN, DIERFIPKLIECIANPNEVPETVHLLGATTFVAEVTP, ATLSIMVPLLSRGLAERETSIKRKAAVIIDNMCKLVED, and PFLGKLLPGLKNNFATIADPEAREVTLKALKTLRRVGNV. N6,N6,N6-trimethyllysine occurs at positions 187 and 196. ADP contacts are provided by Thr392, His396, and Glu397. ABC transporter domains follow at residues 426-641 and 667-993; these read DEGE…YYEL and VKVS…KKEE. An ADP-binding site is contributed by Asn703. The residue at position 789 (Lys789) is an N6,N6,N6-trimethyllysine. Residues Glu922, Asn925, and His951 each coordinate ADP. Position 972 is a phosphothreonine (Thr972). Position 974 is a phosphoserine (Ser974). The disordered stretch occupies residues 975–1044; sequence GHNWVAGQGA…DEYVSSDEDF (70 aa). Over residues 987-999 the composition is skewed to basic and acidic residues; sequence RIEKKEEEGDKFD. Over residues 1020-1031 the composition is skewed to basic residues; the sequence is RKKKKERMKKKK. Residues Ser1039 and Ser1040 each carry the phosphoserine modification.

This sequence belongs to the ABC transporter superfamily. ABCF family. EF3 subfamily. In terms of assembly, monomer.

It is found in the cytoplasm. It catalyses the reaction ATP + H2O = ADP + phosphate + H(+). The protein operates within protein biosynthesis; polypeptide chain elongation. Functionally, ribosome-dependent ATPase that promotes the translation of proteins required for detoxification of reactive oxygen species. Required for the ATP-dependent release of deacylated tRNA from the ribosomal E-site during protein biosynthesis. Stimulates the eEF1A-dependent binding of aminoacyl-tRNA to the ribosomal A-site, which has reduced affinity for tRNA as long as the E-site is occupied. Assists translation termination by stimulating the release of nascent protein from the ribosome by release factors. This chain is Elongation factor 3B, found in Saccharomyces cerevisiae (strain ATCC 204508 / S288c) (Baker's yeast).